The sequence spans 239 residues: Large ribosomal subunit protein uL2 (239 aa).

Positions V200–K239 are disordered. Basic residues predominate over residues P222 to K239.

This sequence belongs to the universal ribosomal protein uL2 family. Part of the 50S ribosomal subunit. Forms a bridge to the 30S subunit in the 70S ribosome.

In terms of biological role, one of the primary rRNA binding proteins. Required for association of the 30S and 50S subunits to form the 70S ribosome, for tRNA binding and peptide bond formation. It has been suggested to have peptidyltransferase activity; this is somewhat controversial. Makes several contacts with the 16S rRNA in the 70S ribosome. This Thermococcus gammatolerans (strain DSM 15229 / JCM 11827 / EJ3) protein is Large ribosomal subunit protein uL2.